Consider the following 318-residue polypeptide: Replication factor C small subunit (318 aa).

Glycine 43–threonine 50 lines the ATP pocket.

It belongs to the activator 1 small subunits family. RfcS subfamily. Heteromultimer composed of small subunits (RfcS) and large subunits (RfcL).

In terms of biological role, part of the RFC clamp loader complex which loads the PCNA sliding clamp onto DNA. This chain is Replication factor C small subunit, found in Picrophilus torridus (strain ATCC 700027 / DSM 9790 / JCM 10055 / NBRC 100828 / KAW 2/3).